We begin with the raw amino-acid sequence, 832 residues long: WD repeat-containing protein 75 (832 aa).

13 WD repeats span residues 4 to 43, 47 to 86, 90 to 134, 148 to 187, 196 to 233, 239 to 278, 281 to 320, 326 to 364, 378 to 425, 432 to 474, 485 to 523, 527 to 567, and 572 to 609; these read KTDI…KVYS, EEWL…KLWD, GILI…QLVA, KELS…YFFR, LKAT…RLWR, KEYT…VQWQ, DMSK…SIIE, SGLI…QFYS, QQEY…KLWA, SFVL…KAWC, YWSC…TLWS, WELL…CCWN, and ALEW…FVFK. 2 disordered regions span residues 704-723 and 759-811; these read QHKL…HTQG and VREE…AQER. A compositionally biased stretch (acidic residues) spans 764–785; that stretch reads DSSEQEMDSEKEEEESEEEMEA. Residues 799-811 show a composition bias toward basic and acidic residues; sequence DEQKPKLSKAQER.

In terms of assembly, component of the proposed t-UTP subcomplex of the ribosomal small subunit (SSU) processome. SSU processome is composed of more than 70 proteins and the RNA chaperone small nucleolar RNA (snoRNA) U3.

It localises to the nucleus. The protein resides in the nucleolus. In terms of biological role, ribosome biogenesis factor. Part of the small subunit (SSU) processome, first precursor of the small eukaryotic ribosomal subunit. During the assembly of the SSU processome in the nucleolus, many ribosome biogenesis factors, an RNA chaperone and ribosomal proteins associate with the nascent pre-rRNA and work in concert to generate RNA folding, modifications, rearrangements and cleavage as well as targeted degradation of pre-ribosomal RNA by the RNA exosome. Involved in nucleolar processing of pre-18S ribosomal RNA. Required for optimal pre-ribosomal RNA transcription by RNA polymerase I. This Danio rerio (Zebrafish) protein is WD repeat-containing protein 75 (wdr75).